Reading from the N-terminus, the 481-residue chain is Cardiolipin synthase A (481 aa).

Helical transmembrane passes span 10-30 (FFGY…LHAL) and 40-60 (IAWA…YLIF). PLD phosphodiesterase domains lie at 220-247 (VNFR…GDEY) and 394-421 (QPGF…DNRS). Residues histidine 225, lysine 227, aspartate 232, histidine 399, lysine 401, and aspartate 406 contribute to the active site.

This sequence belongs to the phospholipase D family. Cardiolipin synthase subfamily. ClsA sub-subfamily.

Its subcellular location is the cell inner membrane. The catalysed reaction is 2 a 1,2-diacyl-sn-glycero-3-phospho-(1'-sn-glycerol) = a cardiolipin + glycerol. In terms of biological role, catalyzes the reversible phosphatidyl group transfer from one phosphatidylglycerol molecule to another to form cardiolipin (CL) (diphosphatidylglycerol) and glycerol. The protein is Cardiolipin synthase A of Pseudomonas putida (Arthrobacter siderocapsulatus).